Reading from the N-terminus, the 552-residue chain is Membrane protein insertase YidC (552 aa).

The chain crosses the membrane as a helical span at residues 3-23; the sequence is IKRTVLWVIFFMSAVMLFDNW. A disordered region spans residues 36 to 59; that stretch reads SATPTRTVGSAAPGTTTPGTQPAD. Residues 42–59 show a composition bias toward low complexity; the sequence is TVGSAAPGTTTPGTQPAD. 3 consecutive transmembrane segments (helical) span residues 364 to 384, 430 to 450, and 504 to 524; these read WGWSIVLLTLLIKAVFFPLSA, FGGCLPVVIQIPVFISLYWVL, and MMFMPIAFSVMFFFFPAGLVL.

The protein belongs to the OXA1/ALB3/YidC family. Type 1 subfamily. In terms of assembly, interacts with the Sec translocase complex via SecD. Specifically interacts with transmembrane segments of nascent integral membrane proteins during membrane integration.

The protein resides in the cell inner membrane. Its function is as follows. Required for the insertion and/or proper folding and/or complex formation of integral membrane proteins into the membrane. Involved in integration of membrane proteins that insert both dependently and independently of the Sec translocase complex, as well as at least some lipoproteins. Aids folding of multispanning membrane proteins. The sequence is that of Membrane protein insertase YidC from Paraburkholderia xenovorans (strain LB400).